A 171-amino-acid polypeptide reads, in one-letter code: Large ribosomal subunit protein uL10 (171 aa).

This sequence belongs to the universal ribosomal protein uL10 family. In terms of assembly, part of the ribosomal stalk of the 50S ribosomal subunit. The N-terminus interacts with L11 and the large rRNA to form the base of the stalk. The C-terminus forms an elongated spine to which L12 dimers bind in a sequential fashion forming a multimeric L10(L12)X complex.

In terms of biological role, forms part of the ribosomal stalk, playing a central role in the interaction of the ribosome with GTP-bound translation factors. This is Large ribosomal subunit protein uL10 from Lactococcus lactis subsp. cremoris (strain SK11).